A 247-amino-acid polypeptide reads, in one-letter code: Fibroblast growth factor 14 (247 aa).

2 disordered regions span residues 1–37 and 216–247; these read MAAA…SKNR and ETVP…CKTT. Over residues 15-25 the composition is skewed to basic and acidic residues; it reads QAREQHWDRPS.

The protein belongs to the heparin-binding growth factors family. Interacts with SCN8A. As to expression, brain and testis; widely distributed in the developing nervous system. In adult, high levels in the granular layer of the cerebellum, less in hippocampus and olfactory bulb.

The protein localises to the nucleus. Probably involved in nervous system development and function. This Mus musculus (Mouse) protein is Fibroblast growth factor 14 (Fgf14).